An 81-amino-acid polypeptide reads, in one-letter code: MSRECYLTGKKNLVVNSVIRRGKARADGGVGRKTTGITKRVQRANLHKKAIRENGQVKTVWLSANALRTLSKGPYKGIELI.

Belongs to the bacterial ribosomal protein bL28 family. As to quaternary structure, part of the 50S ribosomal subunit.

This chain is Large ribosomal subunit protein bL28, found in Deinococcus radiodurans (strain ATCC 13939 / DSM 20539 / JCM 16871 / CCUG 27074 / LMG 4051 / NBRC 15346 / NCIMB 9279 / VKM B-1422 / R1).